The following is a 351-amino-acid chain: UDP-N-acetylglucosamine transporter slc35b4 (351 aa).

A run of 10 helical transmembrane segments spans residues 6–26 (LISLIPISMIMVGCCSNVISL), 37–57 (AILVTFFQFATVAFISFFVNI), 77–97 (IPLKTYFLMVSIFFILSVLNN), 104–124 (IPIPFHMIFRSSSLLSTIVIG), 136–156 (QILSLIMVTLGIIFATFSSMP), 173–193 (FSIGMLMLIAAMFLSSILGLI), 209–229 (TIFYSHLFSLPFFLLFKDDIL), 252–274 (TLWVYLIVNVLTQYVCIQGVFIL), 282–302 (TCTLVISIRKFLSIIISVIYF), and 306–326 (FTSLLFTGTILVFLGTFMYST).

Belongs to the nucleotide-sugar transporter family. SLC35B subfamily.

It localises to the golgi apparatus membrane. Sugar transporter that specifically mediates the transport of UDP-N-acetylglucosamine (UDP-GlcNAc) from cytosol into Golgi. The chain is UDP-N-acetylglucosamine transporter slc35b4 (slc35b4) from Dictyostelium discoideum (Social amoeba).